The primary structure comprises 29 residues: Cycloviolacin-O16 (29 aa).

Positions 1 to 29 (GLPCGETCFTGKCYTPGCSCSYPICKKIN) form a cross-link, cyclopeptide (Gly-Asn). 3 disulfides stabilise this stretch: cysteine 4–cysteine 18, cysteine 8–cysteine 20, and cysteine 13–cysteine 25.

In terms of processing, this is a cyclic peptide.

In terms of biological role, probably participates in a plant defense mechanism. The protein is Cycloviolacin-O16 of Viola odorata (Sweet violet).